Here is a 452-residue protein sequence, read N- to C-terminus: tRNA modification GTPase MnmE (452 aa).

(6S)-5-formyl-5,6,7,8-tetrahydrofolate-binding residues include Arg21, Glu82, and Arg121. One can recognise a TrmE-type G domain in the interval 214-372 (GARVVLVGRP…LAKTIATTLL (159 aa)). Residue Asn224 coordinates K(+). Residues 224–229 (NVGKSS), 243–249 (TPIPGTT), 268–271 (DTAG), and 353–355 (SAR) each bind GTP. Ser228 is a binding site for Mg(2+). K(+) contacts are provided by Thr243, Ile245, and Thr248. Thr249 contacts Mg(2+). Residue Lys452 coordinates (6S)-5-formyl-5,6,7,8-tetrahydrofolate.

The protein belongs to the TRAFAC class TrmE-Era-EngA-EngB-Septin-like GTPase superfamily. TrmE GTPase family. In terms of assembly, homodimer. Heterotetramer of two MnmE and two MnmG subunits. The cofactor is K(+).

It localises to the cytoplasm. Functionally, exhibits a very high intrinsic GTPase hydrolysis rate. Involved in the addition of a carboxymethylaminomethyl (cmnm) group at the wobble position (U34) of certain tRNAs, forming tRNA-cmnm(5)s(2)U34. In Chloroflexus aurantiacus (strain ATCC 29366 / DSM 635 / J-10-fl), this protein is tRNA modification GTPase MnmE.